A 152-amino-acid chain; its full sequence is ARL14 effector protein-like (152 aa).

Residues 1–16 (MTEPSQKNNSTQQELT) show a composition bias toward polar residues. Positions 1 to 27 (MTEPSQKNNSTQQELTNHLFPEKSSQI) are disordered.

The polypeptide is ARL14 effector protein-like (Arl14epl) (Mus musculus (Mouse)).